Reading from the N-terminus, the 63-residue chain is Sec-independent protein translocase protein TatA (63 aa).

The helical transmembrane segment at 1–21 (MGSLSMWHWLIVLVIVLLLFG) threads the bilayer. Residues 43–63 (MTDEDAPETAKTVDHKADETK) form a disordered region. The segment covering 53–63 (KTVDHKADETK) has biased composition (basic and acidic residues).

The protein belongs to the TatA/E family. In terms of assembly, the Tat system comprises two distinct complexes: a TatABC complex, containing multiple copies of TatA, TatB and TatC subunits, and a separate TatA complex, containing only TatA subunits. Substrates initially bind to the TatABC complex, which probably triggers association of the separate TatA complex to form the active translocon.

It is found in the cell inner membrane. In terms of biological role, part of the twin-arginine translocation (Tat) system that transports large folded proteins containing a characteristic twin-arginine motif in their signal peptide across membranes. TatA could form the protein-conducting channel of the Tat system. In Rhizobium etli (strain ATCC 51251 / DSM 11541 / JCM 21823 / NBRC 15573 / CFN 42), this protein is Sec-independent protein translocase protein TatA.